A 587-amino-acid polypeptide reads, in one-letter code: Tyrosine-protein kinase transforming protein Src (587 aa).

The tract at residues methionine 1–proline 58 is disordered. Glycine 2 is lipidated: N-myristoyl glycine; by host. The segment covering lysine 7 to histidine 25 has biased composition (basic and acidic residues). The SH3 domain occupies glycine 81 to serine 142. The SH2 domain occupies tryptophan 148–cysteine 245. The region spanning leucine 267–phenylalanine 520 is the Protein kinase domain. ATP is bound by residues leucine 273 to valine 281 and lysine 295. The active-site Proton acceptor is aspartate 386. At tyrosine 416 the chain carries Phosphotyrosine; by autocatalysis.

Belongs to the protein kinase superfamily. Tyr protein kinase family. SRC subfamily. The phosphorylated form is termed pp60v-src.

It catalyses the reaction L-tyrosyl-[protein] + ATP = O-phospho-L-tyrosyl-[protein] + ADP + H(+). Its function is as follows. This phosphoprotein, required for both the initiation and the maintenance of neoplastic transformation, is a protein kinase that catalyzes the phosphorylation of tyrosine residues in vitro. This chain is Tyrosine-protein kinase transforming protein Src (V-SRC), found in Galliformes.